We begin with the raw amino-acid sequence, 157 residues long: SsrA-binding protein (157 aa).

Over residues 136-151 (KRETEKKRDWSREKGR) the composition is skewed to basic and acidic residues. The segment at 136 to 157 (KRETEKKRDWSREKGRLLRARG) is disordered.

The protein belongs to the SmpB family.

The protein localises to the cytoplasm. Functionally, required for rescue of stalled ribosomes mediated by trans-translation. Binds to transfer-messenger RNA (tmRNA), required for stable association of tmRNA with ribosomes. tmRNA and SmpB together mimic tRNA shape, replacing the anticodon stem-loop with SmpB. tmRNA is encoded by the ssrA gene; the 2 termini fold to resemble tRNA(Ala) and it encodes a 'tag peptide', a short internal open reading frame. During trans-translation Ala-aminoacylated tmRNA acts like a tRNA, entering the A-site of stalled ribosomes, displacing the stalled mRNA. The ribosome then switches to translate the ORF on the tmRNA; the nascent peptide is terminated with the 'tag peptide' encoded by the tmRNA and targeted for degradation. The ribosome is freed to recommence translation, which seems to be the essential function of trans-translation. In Rhodopseudomonas palustris (strain HaA2), this protein is SsrA-binding protein.